We begin with the raw amino-acid sequence, 116 residues long: Large ribosomal subunit protein bL17 (116 aa).

Belongs to the bacterial ribosomal protein bL17 family. As to quaternary structure, part of the 50S ribosomal subunit. Contacts protein L32.

The chain is Large ribosomal subunit protein bL17 from Prochlorococcus marinus (strain MIT 9515).